Consider the following 252-residue polypeptide: Adenylate kinase (252 aa).

An ATP-binding site is contributed by 47-52 (GSGKGT). An NMP region spans residues 67–96 (ATGDMLRSQVKQGTPLGLEAKKIMDQGGLV). Residues Thr68, Arg73, 94–96 (GLV), 123–126 (GFPR), and Gln130 each bind AMP. Positions 164 to 201 (GRLVHPASGRSYHKIFSPPKKEMTDDITGEPLVQRSDD) are LID. ATP-binding positions include Arg165 and 174–175 (SY). The AMP site is built by Arg198 and Arg209. Gln237 lines the ATP pocket.

Belongs to the adenylate kinase family. AK2 subfamily. Monomer.

The protein localises to the cytoplasm. It localises to the cytosol. The protein resides in the mitochondrion intermembrane space. The catalysed reaction is AMP + ATP = 2 ADP. Functionally, catalyzes the reversible transfer of the terminal phosphate group between ATP and AMP. Plays an important role in cellular energy homeostasis and in adenine nucleotide metabolism. Adenylate kinase activity is critical for regulation of the phosphate utilization and the AMP de novo biosynthesis pathways. The polypeptide is Adenylate kinase (Lodderomyces elongisporus (strain ATCC 11503 / CBS 2605 / JCM 1781 / NBRC 1676 / NRRL YB-4239) (Yeast)).